The primary structure comprises 213 residues: Ribosomal RNA small subunit methyltransferase G (213 aa).

Residues Gly75, Phe80, 128-129 (IE), and Arg144 each bind S-adenosyl-L-methionine.

This sequence belongs to the methyltransferase superfamily. RNA methyltransferase RsmG family.

It localises to the cytoplasm. It catalyses the reaction guanosine(527) in 16S rRNA + S-adenosyl-L-methionine = N(7)-methylguanosine(527) in 16S rRNA + S-adenosyl-L-homocysteine. In terms of biological role, specifically methylates the N7 position of guanine in position 527 of 16S rRNA. The chain is Ribosomal RNA small subunit methyltransferase G from Brucella suis biovar 1 (strain 1330).